We begin with the raw amino-acid sequence, 503 residues long: Maturase K (503 aa).

This sequence belongs to the intron maturase 2 family. MatK subfamily.

It localises to the plastid. The protein resides in the chloroplast. In terms of biological role, usually encoded in the trnK tRNA gene intron. Probably assists in splicing its own and other chloroplast group II introns. The sequence is that of Maturase K from Diospyros virginiana (American persimmon).